Reading from the N-terminus, the 268-residue chain is Protein MSS18 (268 aa).

The protein to baculovirus occlusion-derived virus envelope protein E27 (ODV-E27).

It is found in the mitochondrion. Functionally, involved in splicing of intron aI5-beta of the mitochondrial COX1 transcript. The polypeptide is Protein MSS18 (MSS18) (Saccharomyces cerevisiae (strain ATCC 204508 / S288c) (Baker's yeast)).